We begin with the raw amino-acid sequence, 1014 residues long: Probable transport protein MmpL11 (1014 aa).

12 consecutive transmembrane segments (helical) span residues 13–33 (WLVF…AMTQ), 156–173 (VRLY…VAAN), 188–208 (IILI…VPLA), 235–255 (TSTV…FILM), 279–299 (GLAV…IYLI), 311–331 (AILA…AALA), 373–393 (ASAA…MMLG), 530–550 (TEPL…LISI), 560–580 (VLMT…VFQW), 598–618 (VPPL…IFLL), 649–669 (AALI…PLVA), and 671–691 (IGVA…LVLV). Residues 783–802 (SDRVLPGAATQESEEDPAMG) are disordered.

This sequence belongs to the resistance-nodulation-cell division (RND) (TC 2.A.6) family. MmpL subfamily.

The protein localises to the cell membrane. This is Probable transport protein MmpL11 (mmpL11) from Mycobacterium leprae (strain TN).